Reading from the N-terminus, the 33-residue chain is Photosystem II reaction center protein Psb30 (33 aa).

A helical transmembrane segment spans residues 5–25; it reads LIVQLGSLTLITIAGPLIVAL.

The protein belongs to the Psb30/Ycf12 family. As to quaternary structure, PSII is composed of 1 copy each of membrane proteins PsbA, PsbB, PsbC, PsbD, PsbE, PsbF, PsbH, PsbI, PsbJ, PsbK, PsbL, PsbM, PsbT, PsbY, PsbZ, Psb30/Ycf12, peripheral proteins of the oxygen-evolving complex and a large number of cofactors. It forms dimeric complexes.

It is found in the plastid. The protein resides in the chloroplast thylakoid membrane. In terms of biological role, a core subunit of photosystem II (PSII), probably helps stabilize the reaction center. The chain is Photosystem II reaction center protein Psb30 from Euglena mutabilis.